We begin with the raw amino-acid sequence, 149 residues long: Deoxyuridine 5'-triphosphate nucleotidohydrolase (149 aa).

Residues 68-70, Asn-81, and 85-87 contribute to the substrate site; these read RSG and LID.

Belongs to the dUTPase family. Mg(2+) is required as a cofactor.

The catalysed reaction is dUTP + H2O = dUMP + diphosphate + H(+). Its pathway is pyrimidine metabolism; dUMP biosynthesis; dUMP from dCTP (dUTP route): step 2/2. Its function is as follows. This enzyme is involved in nucleotide metabolism: it produces dUMP, the immediate precursor of thymidine nucleotides and it decreases the intracellular concentration of dUTP so that uracil cannot be incorporated into DNA. The polypeptide is Deoxyuridine 5'-triphosphate nucleotidohydrolase (Azoarcus sp. (strain BH72)).